Reading from the N-terminus, the 633-residue chain is Replication protein E1 (633 aa).

Residues 84–86 (KRK) carry the Nuclear localization signal motif. Phosphoserine; by host is present on residues S90, S94, and S108. The Nuclear export signal motif lies at 107–116 (LSPRLGAISL). The interval 148 to 168 (NTEGTDETETDQVQTVSGETT) is disordered. A compositionally biased stretch (polar residues) spans 158–168 (DQVQTVSGETT). Residues 169–335 (TDSLGRQQIT…QTVIEYSLAD (167 aa)) are DNA-binding region. Residues 434 to 584 (VDFISFMIAL…FPFDSNGNPV (151 aa)) form the SF3 helicase domain. 460–467 (GPPDTGKS) serves as a coordination point for ATP. A Glycyl lysine isopeptide (Lys-Gly) (interchain with G-Cter in SUMO) cross-link involves residue K541. The disordered stretch occupies residues 609 to 633 (DNEEEENGDPSNTFRCVPGKASRPI).

It belongs to the papillomaviridae E1 protein family. As to quaternary structure, can form hexamers. Interacts with E2 protein; this interaction increases E1 DNA binding specificity. Interacts with host DNA polymerase subunit POLA2. Interacts with host single stranded DNA-binding protein RPA1. Interacts with host TOP1; this interaction stimulates the enzymatic activity of TOP1. In terms of processing, phosphorylated. Sumoylated.

The protein resides in the host nucleus. It catalyses the reaction Couples ATP hydrolysis with the unwinding of duplex DNA by translocating in the 3'-5' direction.. The catalysed reaction is ATP + H2O = ADP + phosphate + H(+). Functionally, ATP-dependent DNA 3'-5' helicase required for initiation of viral DNA replication. It forms a complex with the viral E2 protein. The E1-E2 complex binds to the replication origin which contains binding sites for both proteins. During the initial step, a dimer of E1 interacts with a dimer of protein E2 leading to a complex that binds the viral origin of replication with high specificity. Then, a second dimer of E1 displaces the E2 dimer in an ATP-dependent manner to form the E1 tetramer. Following this, two E1 monomers are added to each half of the site, which results in the formation of two E1 trimers on the viral ori. Subsequently, two hexamers will be created. The double hexamer acts as a bi-directional helicase machinery and unwinds the viral DNA and then recruits the host DNA polymerase to start replication. The protein is Replication protein E1 of Homo sapiens (Human).